A 472-amino-acid polypeptide reads, in one-letter code: Eukaryotic translation initiation factor 2 subunit 3B (472 aa).

Ala-2 is modified (N-acetylalanine). Ser-16 carries the phosphoserine modification. The region spanning 39 to 248 is the tr-type G domain; that stretch reads QATINIGTIG…IVKKIPVPPR (210 aa). The segment at 48–55 is G1; it reads GHVAHGKS. 51 to 56 contributes to the GTP binding site; sequence AHGKST. The interval 76–80 is G2; sequence NITIK. The tract at residues 134-137 is G3; that stretch reads DCPG. Residues 190–193 and 225–227 contribute to the GTP site; these read NKID and SAQ. Residues 190-193 form a G4 region; it reads NKID. The segment at 225–227 is G5; sequence SAQ.

Belongs to the TRAFAC class translation factor GTPase superfamily. Classic translation factor GTPase family. EIF2G subfamily. In terms of assembly, eIF2 is a heterotrimer composed of an alpha, a beta and a gamma chain. eIF2 is member of the 43S pre-initiation complex (43S PIC). In terms of tissue distribution, specifically expressed in testis at the mRNA level.

The catalysed reaction is GTP + H2O = GDP + phosphate + H(+). Its function is as follows. Member of the eIF2 complex that functions in the early steps of protein synthesis by forming a ternary complex with GTP and initiator tRNA. This complex binds to a 40S ribosomal subunit, followed by mRNA binding to form the 43S pre-initiation complex (43S PIC). Junction of the 60S ribosomal subunit to form the 80S initiation complex is preceded by hydrolysis of the GTP bound to eIF2 and release of an eIF2-GDP binary complex. In order for eIF2 to recycle and catalyze another round of initiation, the GDP bound to eIF2 must exchange with GTP by way of a reaction catalyzed by eIF-2B. This is Eukaryotic translation initiation factor 2 subunit 3B from Homo sapiens (Human).